A 393-amino-acid polypeptide reads, in one-letter code: MILVINSGSSSIKFKLFDTSKAIEPILDGLAERIGIDGFLKFEHNNQKYKFEDPLPDHEHAIQLILNKLLELKIISNIDEIKGVGFRVVHGGEISHSSIINEEVLQKIQESVKLAPLHNPAAIIAIKAVKKLMPNTSMIACFDTAFHQTMPQVNYLYSVPYKWYEEFGVRKYGFHGISYEYIVNKCEEILNKKKEHLNLIVCHLGNGASISCIKDGKSYDTSMGLTPLAGLMMGTRSGDIDVSICEYVAKQTNSDIFAITQILNKQSGLLGLSQTSADMRDVLEQYDRNDKKAIIAVEKYVQVVADFIVKYANYLDSIDAVVFTAGIGENADVIRDLICKRVKLLGLQIDQEKNESKYSDYKLISSEKSKIPVYAIRTNEEKMICLDTLNLIK.

N6 serves as a coordination point for Mg(2+). Residue K13 participates in ATP binding. A substrate-binding site is contributed by R87. D143 (proton donor/acceptor) is an active-site residue. Residues 203–207 (HLGNG), 278–280 (DMR), and 326–330 (GIGEN) each bind ATP. E380 contacts Mg(2+).

It belongs to the acetokinase family. In terms of assembly, homodimer. Requires Mg(2+) as cofactor. It depends on Mn(2+) as a cofactor.

It localises to the cytoplasm. The catalysed reaction is acetate + ATP = acetyl phosphate + ADP. It functions in the pathway metabolic intermediate biosynthesis; acetyl-CoA biosynthesis; acetyl-CoA from acetate: step 1/2. Functionally, catalyzes the formation of acetyl phosphate from acetate and ATP. Can also catalyze the reverse reaction. This is Acetate kinase from Mycoplasma capricolum subsp. capricolum (strain California kid / ATCC 27343 / NCTC 10154).